Reading from the N-terminus, the 172-residue chain is Protein GrpE (172 aa).

The segment at 1-23 is disordered; the sequence is MNQDHPECDSEELTQNSPETDPL.

This sequence belongs to the GrpE family. Homodimer.

The protein resides in the cytoplasm. Its function is as follows. Participates actively in the response to hyperosmotic and heat shock by preventing the aggregation of stress-denatured proteins, in association with DnaK and GrpE. It is the nucleotide exchange factor for DnaK and may function as a thermosensor. Unfolded proteins bind initially to DnaJ; upon interaction with the DnaJ-bound protein, DnaK hydrolyzes its bound ATP, resulting in the formation of a stable complex. GrpE releases ADP from DnaK; ATP binding to DnaK triggers the release of the substrate protein, thus completing the reaction cycle. Several rounds of ATP-dependent interactions between DnaJ, DnaK and GrpE are required for fully efficient folding. The sequence is that of Protein GrpE from Xylella fastidiosa (strain M23).